A 131-amino-acid polypeptide reads, in one-letter code: UPF0102 protein YraN (131 aa).

Positions 1 to 19 (MATVPTRSGSPRQLTTKQT) are enriched in polar residues. Positions 1–21 (MATVPTRSGSPRQLTTKQTGD) are disordered.

The protein belongs to the UPF0102 family.

The chain is UPF0102 protein YraN from Escherichia coli O45:K1 (strain S88 / ExPEC).